Consider the following 456-residue polypeptide: O-phospho-L-seryl-tRNA:Cys-tRNA synthase 2 (456 aa).

Residues 146–147 (AR), N251, and 274–276 (SGH) each bind pyridoxal 5'-phosphate. Residue K277 is modified to N6-(pyridoxal phosphate)lysine.

The protein belongs to the SepCysS family. As to quaternary structure, homodimer. Interacts with SepRS. The cofactor is pyridoxal 5'-phosphate.

It catalyses the reaction O-phospho-L-seryl-tRNA(Cys) + hydrogen sulfide + H(+) = L-cysteinyl-tRNA(Cys) + phosphate. Converts O-phospho-L-seryl-tRNA(Cys) (Sep-tRNA(Cys)) to L-cysteinyl-tRNA(Cys) (Cys-tRNA(Cys)). In Methanospirillum hungatei JF-1 (strain ATCC 27890 / DSM 864 / NBRC 100397 / JF-1), this protein is O-phospho-L-seryl-tRNA:Cys-tRNA synthase 2.